The sequence spans 61 residues: Large ribosomal subunit protein uL30 (61 aa).

Belongs to the universal ribosomal protein uL30 family. As to quaternary structure, part of the 50S ribosomal subunit.

This chain is Large ribosomal subunit protein uL30, found in Frankia casuarinae (strain DSM 45818 / CECT 9043 / HFP020203 / CcI3).